Reading from the N-terminus, the 615-residue chain is Chaperone protein HscA homolog (615 aa).

It belongs to the heat shock protein 70 family.

Its function is as follows. Chaperone involved in the maturation of iron-sulfur cluster-containing proteins. Has a low intrinsic ATPase activity which is markedly stimulated by HscB. In Aeromonas salmonicida (strain A449), this protein is Chaperone protein HscA homolog.